The sequence spans 647 residues: Glutamyl-tRNA(Gln) amidotransferase subunit B, mitochondrial (647 aa).

Residues 87-106 (QAKALKKSGHKKKKSSDNQT) form a disordered region. Residues 90-100 (ALKKSGHKKKK) show a composition bias toward basic residues.

It belongs to the GatB/GatE family. GatB subfamily. In terms of assembly, subunit of the heterotrimeric GatCAB amidotransferase (AdT) complex, composed of A, B and C subunits.

Its subcellular location is the mitochondrion. It carries out the reaction L-glutamyl-tRNA(Gln) + L-glutamine + ATP + H2O = L-glutaminyl-tRNA(Gln) + L-glutamate + ADP + phosphate + H(+). Allows the formation of correctly charged Gln-tRNA(Gln) through the transamidation of misacylated Glu-tRNA(Gln) in the mitochondria. The reaction takes place in the presence of glutamine and ATP through an activated gamma-phospho-Glu-tRNA(Gln). This chain is Glutamyl-tRNA(Gln) amidotransferase subunit B, mitochondrial, found in Neurospora crassa (strain ATCC 24698 / 74-OR23-1A / CBS 708.71 / DSM 1257 / FGSC 987).